The sequence spans 216 residues: Adenylate kinase (216 aa).

ATP is bound at residue 10–15 (GAGKGT). The segment at 30–59 (STGDMLRAAVKAGTKLGQQVQGIMAAGKLV) is NMP. Residues Thr-31, Arg-36, 57-59 (KLV), 85-88 (GFPR), and Gln-92 contribute to the AMP site. An LID region spans residues 122–159 (GRRVHMPSGRIYHLKFNPPKITDKDDMTGESLTLRKDD). ATP-binding positions include Arg-123 and 132-133 (IY). AMP is bound by residues Arg-156 and Arg-167. Arg-200 provides a ligand contact to ATP.

This sequence belongs to the adenylate kinase family. As to quaternary structure, monomer.

The protein resides in the cytoplasm. The enzyme catalyses AMP + ATP = 2 ADP. The protein operates within purine metabolism; AMP biosynthesis via salvage pathway; AMP from ADP: step 1/1. Catalyzes the reversible transfer of the terminal phosphate group between ATP and AMP. Plays an important role in cellular energy homeostasis and in adenine nucleotide metabolism. This is Adenylate kinase from Hamiltonella defensa subsp. Acyrthosiphon pisum (strain 5AT).